The chain runs to 345 residues: Phosphate acyltransferase (345 aa).

The protein belongs to the PlsX family. As to quaternary structure, homodimer. Probably interacts with PlsY.

Its subcellular location is the cytoplasm. The catalysed reaction is a fatty acyl-[ACP] + phosphate = an acyl phosphate + holo-[ACP]. It participates in lipid metabolism; phospholipid metabolism. In terms of biological role, catalyzes the reversible formation of acyl-phosphate (acyl-PO(4)) from acyl-[acyl-carrier-protein] (acyl-ACP). This enzyme utilizes acyl-ACP as fatty acyl donor, but not acyl-CoA. This Dichelobacter nodosus (strain VCS1703A) protein is Phosphate acyltransferase.